A 222-amino-acid polypeptide reads, in one-letter code: 7-cyano-7-deazaguanine synthase (222 aa).

14 to 24 serves as a coordination point for ATP; sequence FSGGQDSTTCL. Residues C190, C199, C202, and C205 each coordinate Zn(2+).

The protein belongs to the QueC family. In terms of assembly, homodimer. Zn(2+) serves as cofactor.

The catalysed reaction is 7-carboxy-7-deazaguanine + NH4(+) + ATP = 7-cyano-7-deazaguanine + ADP + phosphate + H2O + H(+). Its pathway is purine metabolism; 7-cyano-7-deazaguanine biosynthesis. Functionally, catalyzes the ATP-dependent conversion of 7-carboxy-7-deazaguanine (CDG) to 7-cyano-7-deazaguanine (preQ(0)). This chain is 7-cyano-7-deazaguanine synthase, found in Staphylococcus aureus (strain bovine RF122 / ET3-1).